Consider the following 135-residue polypeptide: Basic phospholipase A2 KBf-VA (135 aa).

7 disulfide bridges follow: cysteine 28–cysteine 87, cysteine 42–cysteine 134, cysteine 44–cysteine 60, cysteine 59–cysteine 115, cysteine 66–cysteine 108, cysteine 76–cysteine 101, and cysteine 94–cysteine 106. 3 residues coordinate Ca(2+): tyrosine 43, glycine 45, and glycine 47. The active site involves histidine 63. Aspartate 64 is a Ca(2+) binding site. The active site involves aspartate 109.

It belongs to the phospholipase A2 family. Group I subfamily. D49 sub-subfamily. Requires Ca(2+) as cofactor. As to expression, expressed by the venom gland.

It localises to the secreted. It catalyses the reaction a 1,2-diacyl-sn-glycero-3-phosphocholine + H2O = a 1-acyl-sn-glycero-3-phosphocholine + a fatty acid + H(+). In terms of biological role, snake venom phospholipase A2 (PLA2) that inhibits neuromuscular transmission by blocking acetylcholine release from the nerve termini. PLA2 catalyzes the calcium-dependent hydrolysis of the 2-acyl groups in 3-sn-phosphoglycerides. This is Basic phospholipase A2 KBf-VA from Bungarus fasciatus (Banded krait).